An 82-amino-acid polypeptide reads, in one-letter code: Small ribosomal subunit protein eS21y (82 aa).

M1 carries the N-acetylmethionine modification.

Belongs to the eukaryotic ribosomal protein eS21 family.

The chain is Small ribosomal subunit protein eS21y (RPS21C) from Arabidopsis thaliana (Mouse-ear cress).